Reading from the N-terminus, the 392-residue chain is Homoserine O-acetyltransferase (392 aa).

The region spanning 52 to 356 (NVVVVLHALT…ICGHDGFLVE (305 aa)) is the AB hydrolase-1 domain. Catalysis depends on S157, which acts as the Nucleophile. R227 contacts substrate. Residues D320 and H350 contribute to the active site. Substrate is bound at residue D351. The interval 373–392 (SQSAGPGGAGPGSRKGTTRR) is disordered.

Belongs to the AB hydrolase superfamily. MetX family. Homodimer.

It is found in the cytoplasm. The enzyme catalyses L-homoserine + acetyl-CoA = O-acetyl-L-homoserine + CoA. It participates in amino-acid biosynthesis; L-methionine biosynthesis via de novo pathway; O-acetyl-L-homoserine from L-homoserine: step 1/1. In terms of biological role, transfers an acetyl group from acetyl-CoA to L-homoserine, forming acetyl-L-homoserine. The polypeptide is Homoserine O-acetyltransferase (Mycobacterium avium (strain 104)).